Here is a 383-residue protein sequence, read N- to C-terminus: Cytochrome b (383 aa).

The next 4 helical transmembrane spans lie at 35–55 (FGSI…ILSM), 79–100 (WLFR…YIHI), 115–135 (WGIG…GYVL), and 180–200 (FFSL…LHLF). His-85 and His-99 together coordinate heme b. The heme b site is built by His-184 and His-198. An a ubiquinone-binding site is contributed by His-203. 4 helical membrane passes run 228 to 248 (IKDL…NFQF), 290 to 310 (LGGV…IFYN), 321 to 341 (LNKI…WLGK), and 348 to 368 (FTNI…LNFY).

It belongs to the cytochrome b family. In terms of assembly, the main subunits of complex b-c1 are: cytochrome b, cytochrome c1 and the Rieske protein. It depends on heme b as a cofactor.

The protein resides in the mitochondrion inner membrane. Component of the ubiquinol-cytochrome c reductase complex (complex III or cytochrome b-c1 complex) that is part of the mitochondrial respiratory chain. The b-c1 complex mediates electron transfer from ubiquinol to cytochrome c. Contributes to the generation of a proton gradient across the mitochondrial membrane that is then used for ATP synthesis. The protein is Cytochrome b (MT-CYB) of Apis mellifera ligustica (Common honeybee).